The chain runs to 121 residues: Large ribosomal subunit protein bL19 (121 aa).

The protein belongs to the bacterial ribosomal protein bL19 family.

In terms of biological role, this protein is located at the 30S-50S ribosomal subunit interface and may play a role in the structure and function of the aminoacyl-tRNA binding site. In Borreliella burgdorferi (strain ATCC 35210 / DSM 4680 / CIP 102532 / B31) (Borrelia burgdorferi), this protein is Large ribosomal subunit protein bL19 (rplS).